Consider the following 113-residue polypeptide: Large ribosomal subunit protein uL22 (113 aa).

Belongs to the universal ribosomal protein uL22 family. Part of the 50S ribosomal subunit.

Functionally, this protein binds specifically to 23S rRNA; its binding is stimulated by other ribosomal proteins, e.g. L4, L17, and L20. It is important during the early stages of 50S assembly. It makes multiple contacts with different domains of the 23S rRNA in the assembled 50S subunit and ribosome. In terms of biological role, the globular domain of the protein is located near the polypeptide exit tunnel on the outside of the subunit, while an extended beta-hairpin is found that lines the wall of the exit tunnel in the center of the 70S ribosome. The sequence is that of Large ribosomal subunit protein uL22 from Geobacillus thermodenitrificans (strain NG80-2).